The primary structure comprises 423 residues: Putative UPF0496 protein 5 (423 aa).

Positions 1-14 (MGNRHGIMRPRRLA) are enriched in basic residues. Residues 1 to 37 (MGNRHGIMRPRRLASGRSAAEEEEDGEGEPGSYEAAC) are disordered. 2 helical membrane-spanning segments follow: residues 224 to 244 (IVFL…AAIA) and 247 to 267 (PVAA…GKWM).

Belongs to the UPF0496 family.

It localises to the membrane. The sequence is that of Putative UPF0496 protein 5 from Oryza sativa subsp. japonica (Rice).